The primary structure comprises 30 residues: Rothein 3.3 (30 aa).

Leucine 30 is modified (leucine amide).

As to expression, expressed by the skin dorsal glands.

The protein localises to the secreted. Its function is as follows. Lacks antimicrobial activity. Does not inhibit the formation of NO by neuronal nitric oxide. In Litoria rothii (Roth's tree frog), this protein is Rothein 3.3.